Here is a 373-residue protein sequence, read N- to C-terminus: Dual-specificity RNA methyltransferase RlmN (373 aa).

Glu-94 functions as the Proton acceptor in the catalytic mechanism. One can recognise a Radical SAM core domain in the interval 100–339; that stretch reads DGDRATLCVS…VTVRKTRGDD (240 aa). Cysteines 107 and 344 form a disulfide. Residues Cys-114, Cys-118, and Cys-121 each contribute to the [4Fe-4S] cluster site. Residues 168–169, Ser-200, 222–224, and Asn-301 each bind S-adenosyl-L-methionine; these read GE and SLH. Cys-344 serves as the catalytic S-methylcysteine intermediate.

The protein belongs to the radical SAM superfamily. RlmN family. It depends on [4Fe-4S] cluster as a cofactor.

Its subcellular location is the cytoplasm. It carries out the reaction adenosine(2503) in 23S rRNA + 2 reduced [2Fe-2S]-[ferredoxin] + 2 S-adenosyl-L-methionine = 2-methyladenosine(2503) in 23S rRNA + 5'-deoxyadenosine + L-methionine + 2 oxidized [2Fe-2S]-[ferredoxin] + S-adenosyl-L-homocysteine. The enzyme catalyses adenosine(37) in tRNA + 2 reduced [2Fe-2S]-[ferredoxin] + 2 S-adenosyl-L-methionine = 2-methyladenosine(37) in tRNA + 5'-deoxyadenosine + L-methionine + 2 oxidized [2Fe-2S]-[ferredoxin] + S-adenosyl-L-homocysteine. Functionally, specifically methylates position 2 of adenine 2503 in 23S rRNA and position 2 of adenine 37 in tRNAs. m2A2503 modification seems to play a crucial role in the proofreading step occurring at the peptidyl transferase center and thus would serve to optimize ribosomal fidelity. This is Dual-specificity RNA methyltransferase RlmN from Photobacterium profundum (strain SS9).